The chain runs to 207 residues: Hemin/hemoglobin-binding protein 1 (207 aa).

Residues 1–27 form the signal peptide; sequence MKKVLVFAAFIVLFSFSFLSTGLTAQA. The NEAT domain occupies 29 to 148; the sequence is LKDGTYSVDY…RFDEGSAKAL (120 aa). Residues 151–178 are disordered; it reads AVKSSDNNTTTPATKSDSSNKVTNPKSS. The segment covering 154–178 has biased composition (polar residues); it reads SSDNNTTTPATKSDSSNKVTNPKSS. Residues 174-178 carry the NPKXZ sorting signal motif; it reads NPKSS. Ser177 carries the post-translational modification Murein peptidoglycan amidated serine. A propeptide spans 178–207 (removed by sortase B); the sequence is SDSSQMFLYGIIFVATGAGLILLKRRAIFK.

Its subcellular location is the secreted. The protein localises to the cell wall. In terms of biological role, binds both host hemin and hemoglobin with affinity in the nanomolar range and presumably directs it to membrane transporters. This is Hemin/hemoglobin-binding protein 1 from Listeria monocytogenes serovar 1/2a (strain ATCC BAA-679 / EGD-e).